The primary structure comprises 212 residues: NADH dehydrogenase [ubiquinone] iron-sulfur protein 8, mitochondrial (212 aa).

Residues 1–36 constitute a mitochondrion transit peptide; that stretch reads MRCLTMPMLLRALAQAQAARAGHASVRGLHSSAVAA. 2 4Fe-4S ferredoxin-type domains span residues 104-133 and 143-172; these read RRYP…IEAE and TRYD…EGPN. Positions 113, 116, 119, 123, 152, 155, 158, and 162 each coordinate [4Fe-4S] cluster.

This sequence belongs to the complex I 23 kDa subunit family. Core subunit of respiratory chain NADH dehydrogenase (Complex I) which is composed of 45 different subunits. This is a component of the iron-sulfur (IP) fragment of the enzyme. Interacts with RAB5IF. The cofactor is [4Fe-4S] cluster.

Its subcellular location is the mitochondrion inner membrane. The enzyme catalyses a ubiquinone + NADH + 5 H(+)(in) = a ubiquinol + NAD(+) + 4 H(+)(out). In terms of biological role, core subunit of the mitochondrial membrane respiratory chain NADH dehydrogenase (Complex I) which catalyzes electron transfer from NADH through the respiratory chain, using ubiquinone as an electron acceptor. Essential for the catalytic activity and assembly of complex I. The sequence is that of NADH dehydrogenase [ubiquinone] iron-sulfur protein 8, mitochondrial (NDUFS8) from Bos taurus (Bovine).